The following is a 466-amino-acid chain: Soluble pyridine nucleotide transhydrogenase (466 aa).

36-45 contacts FAD; the sequence is ERYQNVGGGC.

Belongs to the class-I pyridine nucleotide-disulfide oxidoreductase family. The cofactor is FAD.

Its subcellular location is the cytoplasm. The enzyme catalyses NAD(+) + NADPH = NADH + NADP(+). Its function is as follows. Conversion of NADPH, generated by peripheral catabolic pathways, to NADH, which can enter the respiratory chain for energy generation. The polypeptide is Soluble pyridine nucleotide transhydrogenase (Escherichia coli O6:K15:H31 (strain 536 / UPEC)).